The chain runs to 101 residues: Protein Tat (101 aa).

The tract at residues 1 to 24 (MEPIDPNLEPWNHPGSQPKTACNN) is interaction with human CREBBP. The transactivation stretch occupies residues 1–48 (MEPIDPNLEPWNHPGSQPKTACNNCYCKQCCYHCQLCFTKKGLGISYG). The Zn(2+) site is built by C22, C25, and C27. The tract at residues 22 to 37 (CNNCYCKQCCYHCQLC) is cysteine-rich. K28 carries the N6-acetyllysine; by host PCAF modification. 4 residues coordinate Zn(2+): C30, H33, C34, and C37. Residues 38–48 (FTKKGLGISYG) are core. The interval 48–101 (GRRKRKQRRRTSESSQNHQDPVPKQPLSQPGGIETGQKKSKKEVESQTTSDQFA) is disordered. Residues 49-57 (RRKRKQRRR) carry the Nuclear localization signal, RNA-binding (TAR), and protein transduction motif. Residues 49-86 (RRKRKQRRRTSESSQNHQDPVPKQPLSQPGGIETGQKK) form an interaction with the host capping enzyme RNGTT region. K51 is modified (N6-acetyllysine; by host EP300 and GCN5L2). R52 carries the post-translational modification Asymmetric dimethylarginine; by host PRMT6. A Glycyl lysine isopeptide (Lys-Gly) (interchain with G-Cter in ubiquitin) cross-link involves residue K71.

Belongs to the lentiviruses Tat family. Interacts with host CCNT1. Associates with the P-TEFb complex composed at least of Tat, P-TEFb (CDK9 and CCNT1), TAR RNA, RNA Pol II. Recruits the HATs CREBBP, TAF1/TFIID, EP300, PCAF and GCN5L2. Interacts with host KAT5/Tip60; this interaction targets the latter to degradation. Interacts with the host deacetylase SIRT1. Interacts with host capping enzyme RNGTT; this interaction stimulates RNGTT. Binds to host KDR, and to the host integrins ITGAV/ITGB3 and ITGA5/ITGB1. Interacts with host KPNB1/importin beta-1 without previous binding to KPNA1/importin alpha-1. Interacts with EIF2AK2. Interacts with host nucleosome assembly protein NAP1L1; this interaction may be required for the transport of Tat within the nucleus, since the two proteins interact at the nuclear rim. Interacts with host C1QBP/SF2P32; this interaction involves lysine-acetylated Tat. Interacts with the host chemokine receptors CCR2, CCR3 and CXCR4. Interacts with host DPP4/CD26; this interaction may trigger an anti-proliferative effect. Interacts with host LDLR. Interacts with the host extracellular matrix metalloproteinase MMP1. Interacts with host PRMT6; this interaction mediates Tat's methylation. Interacts with, and is ubiquitinated by MDM2/Hdm2. Interacts with host PSMC3 and HTATIP2. Interacts with STAB1; this interaction may overcome SATB1-mediated repression of IL2 and IL2RA (interleukin) in T cells by binding to the same domain than HDAC1. Interacts (when acetylated) with human CDK13, thereby increasing HIV-1 mRNA splicing and promoting the production of the doubly spliced HIV-1 protein Nef. Interacts with host TBP; this interaction modulates the activity of transcriptional pre-initiation complex. Interacts with host RELA. Asymmetrical arginine methylation by host PRMT6 seems to diminish the transactivation capacity of Tat and affects the interaction with host CCNT1. In terms of processing, polyubiquitination by host MDM2 does not target Tat to degradation, but activates its transactivation function and fosters interaction with CCNT1 and TAR RNA. Post-translationally, phosphorylated by EIF2AK2 on serine and threonine residues adjacent to the basic region important for TAR RNA binding and function. Phosphorylation of Tat by EIF2AK2 is dependent on the prior activation of EIF2AK2 by dsRNA.

The protein resides in the host nucleus. Its subcellular location is the host nucleolus. It is found in the host cytoplasm. It localises to the secreted. Functionally, transcriptional activator that increases RNA Pol II processivity, thereby increasing the level of full-length viral transcripts. Recognizes a hairpin structure at the 5'-LTR of the nascent viral mRNAs referred to as the transactivation responsive RNA element (TAR) and recruits the cyclin T1-CDK9 complex (P-TEFb complex) that will in turn hyperphosphorylate the RNA polymerase II to allow efficient elongation. The CDK9 component of P-TEFb and other Tat-activated kinases hyperphosphorylate the C-terminus of RNA Pol II that becomes stabilized and much more processive. Other factors such as HTATSF1/Tat-SF1, SUPT5H/SPT5, and HTATIP2 are also important for Tat's function. Besides its effect on RNA Pol II processivity, Tat induces chromatin remodeling of proviral genes by recruiting the histone acetyltransferases (HATs) CREBBP, EP300 and PCAF to the chromatin. This also contributes to the increase in proviral transcription rate, especially when the provirus integrates in transcriptionally silent region of the host genome. To ensure maximal activation of the LTR, Tat mediates nuclear translocation of NF-kappa-B by interacting with host RELA. Through its interaction with host TBP, Tat may also modulate transcription initiation. Tat can reactivate a latently infected cell by penetrating in it and transactivating its LTR promoter. In the cytoplasm, Tat is thought to act as a translational activator of HIV-1 mRNAs. In terms of biological role, extracellular circulating Tat can be endocytosed by surrounding uninfected cells via the binding to several surface receptors such as CD26, CXCR4, heparan sulfate proteoglycans (HSPG) or LDLR. Neurons are rarely infected, but they internalize Tat via their LDLR. Through its interaction with nuclear HATs, Tat is potentially able to control the acetylation-dependent cellular gene expression. Modulates the expression of many cellular genes involved in cell survival, proliferation or in coding for cytokines or cytokine receptors. Tat plays a role in T-cell and neurons apoptosis. Tat induced neurotoxicity and apoptosis probably contribute to neuroAIDS. Circulating Tat also acts as a chemokine-like and/or growth factor-like molecule that binds to specific receptors on the surface of the cells, affecting many cellular pathways. In the vascular system, Tat binds to ITGAV/ITGB3 and ITGA5/ITGB1 integrins dimers at the surface of endothelial cells and competes with bFGF for heparin-binding sites, leading to an excess of soluble bFGF. The chain is Protein Tat from Pan troglodytes (Chimpanzee).